Consider the following 124-residue polypeptide: Snaclec rhodocetin subunit delta (124 aa).

3 disulfides stabilise this stretch: Cys-1–Cys-12, Cys-29–Cys-120, and Cys-95–Cys-112. The 114-residue stretch at 8–121 folds into the C-type lectin domain; the sequence is YNGYCYRVFS…CEKTVSFVCK (114 aa).

The protein belongs to the snaclec family. As to quaternary structure, heterotetramer of subunit alpha, beta, gamma and delta; only the gamma and the delta subunits are disulfide-linked. Alpha-beta heterodimer and gamma-delta heterodimer associate orthogonally, giving a cruciform conformation. This heterotetramer may covalently dimerizes thanks to the gamma subunit. In terms of tissue distribution, expressed by the venom gland.

It is found in the secreted. Functionally, potent inhibitor of collagen-induced platelet aggregation. It acts by binding to the integrin alpha2A domain and blocks collagen binding to integrin alpha-2/beta-1 (ITGA2/ITGB1). The gamma/delta subunits mainly contribute to this activity. This Calloselasma rhodostoma (Malayan pit viper) protein is Snaclec rhodocetin subunit delta.